Reading from the N-terminus, the 279-residue chain is Probable diacylglycerol pyrophosphate phosphatase 1 (279 aa).

The Lumenal segment spans residues 1 to 17 (MEAVGKHVKLFWNVYSD). Residues 18-38 (YAVLIAISLSYFVFDVLMLPF) traverse the membrane as a helical segment. The Cytoplasmic segment spans residues 39 to 58 (TRQFSLEDITISHPFALHEQ). Residues 59-79 (VPTKYLGIICVFFPALVLYGF) traverse the membrane as a helical segment. Residues 80–86 (GKLRNNS) are Lumenal-facing. The chain crosses the membrane as a helical span at residues 87-107 (LLFWKSLMGLLYSTMVCGLCV). Residues 108–163 (SLLKNAVGRPRPDFLARCQPFESTPKTGLVDVLSCSVPWSDKVLQDGFRSFPSGHT) are Cytoplasmic-facing. The interval 111–119 (KNAVGRPRP) is phosphatase sequence motif I. A phosphatase sequence motif II region spans residues 159-162 (PSGH). Residues 164–184 (SFSFAGLGFLAIFLAGQLKMF) form a helical membrane-spanning segment. Residues 185-187 (RNK) are Lumenal-facing. Residues 188 to 208 (TSSWKVVVPLVPLSIASWIGL) form a helical membrane-spanning segment. Residues 209–220 (SRSQDYRHHKED) lie on the Cytoplasmic side of the membrane. The interval 209–220 (SRSQDYRHHKED) is phosphatase sequence motif III. A helical transmembrane segment spans residues 221–241 (IAVGALFGFAIAYVVYRQLFP). At 242 to 279 (PLDHHNADILYVQAELDEGYTNVHSAGNSSATNAEQMV) the chain is on the lumenal side.

It belongs to the PA-phosphatase related phosphoesterase family.

The protein resides in the vacuole membrane. The protein localises to the endoplasmic reticulum membrane. The catalysed reaction is a 1,2-diacyl-sn-glycerol 3-diphosphate + H2O = a 1,2-diacyl-sn-glycero-3-phosphate + phosphate + H(+). It carries out the reaction a 1,2-diacyl-sn-glycero-3-phosphate + H2O = a 1,2-diacyl-sn-glycerol + phosphate. Catalyzes the dephosphorylation of diacylglycerol phosphate (DGPP) to phosphatidate (PA) and the subsequent dephosphorylation of PA to diacylglycerol (DAG). This is Probable diacylglycerol pyrophosphate phosphatase 1 (dpp1) from Schizosaccharomyces pombe (strain 972 / ATCC 24843) (Fission yeast).